Here is a 332-residue protein sequence, read N- to C-terminus: Glycerol-3-phosphate dehydrogenase [NAD(P)+] (332 aa).

NADPH contacts are provided by Trp-13, Lys-34, and Lys-108. 3 residues coordinate sn-glycerol 3-phosphate: Lys-108, Gly-136, and Ser-138. Residue Ala-140 participates in NADPH binding. Lys-191, Asp-244, Ser-254, Arg-255, and Asn-256 together coordinate sn-glycerol 3-phosphate. The Proton acceptor role is filled by Lys-191. NADPH is bound at residue Arg-255. Val-279 and Glu-281 together coordinate NADPH.

It belongs to the NAD-dependent glycerol-3-phosphate dehydrogenase family.

The protein localises to the cytoplasm. The enzyme catalyses sn-glycerol 3-phosphate + NAD(+) = dihydroxyacetone phosphate + NADH + H(+). It carries out the reaction sn-glycerol 3-phosphate + NADP(+) = dihydroxyacetone phosphate + NADPH + H(+). It functions in the pathway membrane lipid metabolism; glycerophospholipid metabolism. Catalyzes the reduction of the glycolytic intermediate dihydroxyacetone phosphate (DHAP) to sn-glycerol 3-phosphate (G3P), the key precursor for phospholipid synthesis. This is Glycerol-3-phosphate dehydrogenase [NAD(P)+] from Francisella philomiragia subsp. philomiragia (strain ATCC 25017 / CCUG 19701 / FSC 153 / O#319-036).